Here is a 138-residue protein sequence, read N- to C-terminus: Acidic phospholipase A2 BITP01A (138 aa).

The signal sequence occupies residues 1–16 (MRTLWIMAVLLVGVEG). Intrachain disulfides connect Cys-42–Cys-131, Cys-44–Cys-60, Cys-59–Cys-111, Cys-65–Cys-138, Cys-66–Cys-104, Cys-73–Cys-97, and Cys-91–Cys-102. The Ca(2+) site is built by Tyr-43, Gly-45, and Gly-47. Residue His-63 is part of the active site. A Ca(2+)-binding site is contributed by Asp-64. Residue Asp-105 is part of the active site.

Ca(2+) serves as cofactor. Expressed by the venom gland.

The protein localises to the secreted. The catalysed reaction is a 1,2-diacyl-sn-glycero-3-phosphocholine + H2O = a 1-acyl-sn-glycero-3-phosphocholine + a fatty acid + H(+). Its function is as follows. Snake venom phospholipase A2 (PLA2) that induces edema in mice, produces neuromuscular blockade in chick biventer cervicis, increases CK release and produces myonecrosis. PLA2 catalyzes the calcium-dependent hydrolysis of the 2-acyl groups in 3-sn-phosphoglycerides. The chain is Acidic phospholipase A2 BITP01A from Bothrops insularis (Golden lancehead).